Reading from the N-terminus, the 603-residue chain is Phosphoenolpyruvate carboxykinase [GTP] (603 aa).

Residues arginine 87 and 209 to 211 (YAG) contribute to the substrate site. Lysine 218 and histidine 237 together coordinate Mn(2+). Serine 258 is a binding site for substrate. 259–264 (GSGKTS) serves as a coordination point for GTP. Serine 260 is an active-site residue. Aspartate 275 is a binding site for Mn(2+). 365-367 (NAR) is a binding site for substrate. GTP is bound by residues arginine 367 and arginine 398.

Belongs to the phosphoenolpyruvate carboxykinase [GTP] family. It depends on Mn(2+) as a cofactor.

Its subcellular location is the cytoplasm. The enzyme catalyses oxaloacetate + GTP = phosphoenolpyruvate + GDP + CO2. It functions in the pathway carbohydrate biosynthesis; gluconeogenesis. Functionally, catalyzes the conversion of oxaloacetate (OAA) to phosphoenolpyruvate (PEP), the rate-limiting step in the metabolic pathway that produces glucose from lactate and other precursors derived from the citric acid cycle. This Saccharolobus solfataricus (strain ATCC 35092 / DSM 1617 / JCM 11322 / P2) (Sulfolobus solfataricus) protein is Phosphoenolpyruvate carboxykinase [GTP].